The chain runs to 105 residues: UPF0145 protein lpl0253 (105 aa).

This sequence belongs to the UPF0145 family.

The polypeptide is UPF0145 protein lpl0253 (Legionella pneumophila (strain Lens)).